The chain runs to 87 residues: Defensin-like protein 100 (87 aa).

An N-terminal signal peptide occupies residues 1–29 (MRSLRLRTVVVATIVVCLSVLLSPTEVDG). Intrachain disulfides connect Cys-31–Cys-79, Cys-38–Cys-64, Cys-44–Cys-76, and Cys-48–Cys-78.

Belongs to the DEFL family.

The protein resides in the secreted. The polypeptide is Defensin-like protein 100 (Arabidopsis thaliana (Mouse-ear cress)).